A 326-amino-acid chain; its full sequence is Flap endonuclease 1 (326 aa).

The interval 1–98 is N-domain; sequence MGVQFGDFIP…KTRKVRREMK (98 aa). The Mg(2+) site is built by D27, D80, E152, E154, D173, D175, and D224. Positions 116-245 are I-domain; the sequence is EAAKYAKRVS…KRAYELVRSG (130 aa). The tract at residues 317-325 is interaction with PCNA; sequence KQKTLDAWF.

This sequence belongs to the XPG/RAD2 endonuclease family. FEN1 subfamily. As to quaternary structure, interacts with PCNA. PCNA stimulates the nuclease activity without altering cleavage specificity. Mg(2+) serves as cofactor.

Functionally, structure-specific nuclease with 5'-flap endonuclease and 5'-3' exonuclease activities involved in DNA replication and repair. During DNA replication, cleaves the 5'-overhanging flap structure that is generated by displacement synthesis when DNA polymerase encounters the 5'-end of a downstream Okazaki fragment. Binds the unpaired 3'-DNA end and kinks the DNA to facilitate 5' cleavage specificity. Cleaves one nucleotide into the double-stranded DNA from the junction in flap DNA, leaving a nick for ligation. Also involved in the base excision repair (BER) pathway. Acts as a genome stabilization factor that prevents flaps from equilibrating into structures that lead to duplications and deletions. Also possesses 5'-3' exonuclease activity on nicked or gapped double-stranded DNA. The chain is Flap endonuclease 1 from Methanocaldococcus jannaschii (strain ATCC 43067 / DSM 2661 / JAL-1 / JCM 10045 / NBRC 100440) (Methanococcus jannaschii).